Reading from the N-terminus, the 244-residue chain is 5-oxoprolinase subunit A (244 aa).

This sequence belongs to the LamB/PxpA family. In terms of assembly, forms a complex composed of PxpA, PxpB and PxpC.

The enzyme catalyses 5-oxo-L-proline + ATP + 2 H2O = L-glutamate + ADP + phosphate + H(+). Its function is as follows. Catalyzes the cleavage of 5-oxoproline to form L-glutamate coupled to the hydrolysis of ATP to ADP and inorganic phosphate. The protein is 5-oxoprolinase subunit A of Salmonella arizonae (strain ATCC BAA-731 / CDC346-86 / RSK2980).